A 378-amino-acid chain; its full sequence is Quinolinate synthase (378 aa).

Iminosuccinate is bound by residues histidine 59 and serine 80. Cysteine 125 contributes to the [4Fe-4S] cluster binding site. Residues 151 to 153 (YAN) and serine 168 each bind iminosuccinate. Cysteine 212 contacts [4Fe-4S] cluster. Residues 238–240 (HPE) and threonine 255 contribute to the iminosuccinate site. Cysteine 309 serves as a coordination point for [4Fe-4S] cluster.

It belongs to the quinolinate synthase family. Type 1 subfamily. [4Fe-4S] cluster serves as cofactor.

The protein resides in the cytoplasm. It carries out the reaction iminosuccinate + dihydroxyacetone phosphate = quinolinate + phosphate + 2 H2O + H(+). The protein operates within cofactor biosynthesis; NAD(+) biosynthesis; quinolinate from iminoaspartate: step 1/1. Its function is as follows. Catalyzes the condensation of iminoaspartate with dihydroxyacetone phosphate to form quinolinate. This chain is Quinolinate synthase, found in Burkholderia cenocepacia (strain HI2424).